A 507-amino-acid polypeptide reads, in one-letter code: Protein MosB (507 aa).

The H-T-H motif DNA-binding region spans 256 to 275; it reads QAHGALYKGQHVGLLSDIGC. K282 is modified (N6-(pyridoxal phosphate)lysine).

Belongs to the DegT/DnrJ/EryC1 family.

Involved in the biosynthesis of the rhizopine 3-O-methyl-scyllo-inosamine. May have a regulatory role in controlling the housekeeping genes within the nodule which are involved in the biosynthesis of the rhizopine backbone. The chain is Protein MosB (mosB) from Rhizobium meliloti (Ensifer meliloti).